Consider the following 215-residue polypeptide: Proteasome subunit beta type-1 (215 aa).

Methionine 1 is subject to N-acetylmethionine. Residues 1-19 (MNGIQVDINRLKKGEVSLG) constitute a propeptide, removed in mature form. Threonine 20 functions as the Nucleophile in the catalytic mechanism.

It belongs to the peptidase T1B family. The 26S proteasome consists of a 20S proteasome core and two 19S regulatory subunits. The 20S proteasome core is composed of 28 subunits that are arranged in four stacked rings, resulting in a barrel-shaped structure. The two end rings are each formed by seven alpha subunits, and the two central rings are each formed by seven beta subunits. The catalytic chamber with the active sites is on the inside of the barrel.

Its subcellular location is the cytoplasm. The protein resides in the nucleus. It carries out the reaction Cleavage of peptide bonds with very broad specificity.. Functionally, the proteasome degrades poly-ubiquitinated proteins in the cytoplasm and in the nucleus. It is essential for the regulated turnover of proteins and for the removal of misfolded proteins. The proteasome is a multicatalytic proteinase complex that is characterized by its ability to cleave peptides with Arg, Phe, Tyr, Leu, and Glu adjacent to the leaving group at neutral or slightly basic pH. It has an ATP-dependent proteolytic activity. PRE3 and PRE4 are necessary for the peptidyl-glutamyl-peptide-hydrolyzing activity. In terms of biological role, this subunit is necessary for the peptidylglutamyl-peptide hydrolyzing activity. In Saccharomyces cerevisiae (strain ATCC 204508 / S288c) (Baker's yeast), this protein is Proteasome subunit beta type-1 (PRE3).